We begin with the raw amino-acid sequence, 373 residues long: Anhydro-N-acetylmuramic acid kinase (373 aa).

ATP is bound at residue 13 to 20; that stretch reads GTSMDGID.

Belongs to the anhydro-N-acetylmuramic acid kinase family.

The enzyme catalyses 1,6-anhydro-N-acetyl-beta-muramate + ATP + H2O = N-acetyl-D-muramate 6-phosphate + ADP + H(+). Its pathway is amino-sugar metabolism; 1,6-anhydro-N-acetylmuramate degradation. It functions in the pathway cell wall biogenesis; peptidoglycan recycling. Catalyzes the specific phosphorylation of 1,6-anhydro-N-acetylmuramic acid (anhMurNAc) with the simultaneous cleavage of the 1,6-anhydro ring, generating MurNAc-6-P. Is required for the utilization of anhMurNAc either imported from the medium or derived from its own cell wall murein, and thus plays a role in cell wall recycling. The sequence is that of Anhydro-N-acetylmuramic acid kinase from Agrobacterium fabrum (strain C58 / ATCC 33970) (Agrobacterium tumefaciens (strain C58)).